The chain runs to 114 residues: Putative membrane protein insertion efficiency factor (114 aa).

Belongs to the UPF0161 family.

The protein resides in the cell inner membrane. Could be involved in insertion of integral membrane proteins into the membrane. This is Putative membrane protein insertion efficiency factor from Wolinella succinogenes (strain ATCC 29543 / DSM 1740 / CCUG 13145 / JCM 31913 / LMG 7466 / NCTC 11488 / FDC 602W) (Vibrio succinogenes).